A 583-amino-acid polypeptide reads, in one-letter code: uncharacterized protein (583 aa).

This is an uncharacterized protein from Sinorhizobium fredii (strain NBRC 101917 / NGR234).